Here is a 649-residue protein sequence, read N- to C-terminus: DNA mismatch repair protein MutL (649 aa).

This sequence belongs to the DNA mismatch repair MutL/HexB family.

Functionally, this protein is involved in the repair of mismatches in DNA. It is required for dam-dependent methyl-directed DNA mismatch repair. May act as a 'molecular matchmaker', a protein that promotes the formation of a stable complex between two or more DNA-binding proteins in an ATP-dependent manner without itself being part of a final effector complex. This chain is DNA mismatch repair protein MutL, found in Streptococcus pneumoniae (strain JJA).